A 215-amino-acid polypeptide reads, in one-letter code: Orotate phosphoribosyltransferase (215 aa).

Lys26 is a binding site for 5-phospho-alpha-D-ribose 1-diphosphate. Orotate is bound at residue 34–35 (FF). 5-phospho-alpha-D-ribose 1-diphosphate contacts are provided by residues 72–73 (YK), Arg99, Lys100, Lys103, His105, and 124–132 (DDVITAGTA). Residues Thr128 and Arg156 each coordinate orotate.

The protein belongs to the purine/pyrimidine phosphoribosyltransferase family. PyrE subfamily. Homodimer. The cofactor is Mg(2+).

It carries out the reaction orotidine 5'-phosphate + diphosphate = orotate + 5-phospho-alpha-D-ribose 1-diphosphate. The protein operates within pyrimidine metabolism; UMP biosynthesis via de novo pathway; UMP from orotate: step 1/2. Its function is as follows. Catalyzes the transfer of a ribosyl phosphate group from 5-phosphoribose 1-diphosphate to orotate, leading to the formation of orotidine monophosphate (OMP). The sequence is that of Orotate phosphoribosyltransferase from Cellvibrio japonicus (strain Ueda107) (Pseudomonas fluorescens subsp. cellulosa).